The sequence spans 251 residues: Insulin-induced gene 1 protein (251 aa).

Topologically, residues 1-58 (MPRLEEHCWSCSCSTSVKTKDLSSAGWIVCKTGEMMSIITSVLSHAYGSLHSLQSANL) are cytoplasmic. Residues 59 to 81 (IRRGLVLFIVGVVLALVLNLLQI) form a helical membrane-spanning segment. The Extracellular portion of the chain corresponds to 82-100 (QRNVTLFPEEVLDTLFSSA). Residues 101–118 (WWIPLCCGTAAAVVGLLY) form a helical membrane-spanning segment. Over 119-133 (PCLDHHLGEPHKFKR) the chain is Cytoplasmic. Residues 134–156 (EWASVMRCIAVFVGINHASAKLD) traverse the membrane as a helical segment. The Extracellular portion of the chain corresponds to 157–159 (FAN). Residues 160 to 178 (NVQLSLTLAALSLGLWWTF) form a helical membrane-spanning segment. Over 179–183 (DRSRS) the chain is Cytoplasmic. The helical transmembrane segment at 184–205 (GFGLGLTTALLATLIAQLLVYN) threads the bilayer. The Extracellular portion of the chain corresponds to 206 to 219 (GIYQYTSPDFLYVR). A helical transmembrane segment spans residues 220-237 (SWLPCIFFSGGVTVGNIG). Residues 238–251 (RQLAMGSTEKIHND) are Cytoplasmic-facing. The KxHxx signature appears at 245 to 251 (TEKIHND).

It belongs to the INSIG family. In terms of assembly, interacts with scap; interaction is direct and only takes place in the presence of sterols; it prevents interaction between scap and the coat protein complex II (COPII). Associates with the SCAP-SREBP complex; association is mediated via its interaction with scap and only takes place in the presence of sterols.

The protein resides in the endoplasmic reticulum membrane. Its function is as follows. Oxysterol-binding protein that mediates feedback control of cholesterol synthesis by controlling both endoplasmic reticulum to Golgi transport of scap and degradation of hmgcr. Acts as a negative regulator of cholesterol biosynthesis by mediating the retention of the SCAP-SREBP complex in the endoplasmic reticulum, thereby blocking the processing of sterol regulatory element-binding proteins (SREBPs). Binds oxysterol, including 25-hydroxycholesterol, regulating interaction with scap and retention of the SCAP-SREBP complex in the endoplasmic reticulum. In presence of oxysterol, interacts with scap, retaining the SCAP-SREBP complex in the endoplasmic reticulum, thereby preventing scap from escorting SREBPs to the Golgi. Sterol deprivation reduces oxysterol-binding, disrupting the interaction between insig1 and scap, thereby promoting Golgi transport of the SCAP-SREBP complex, followed by processing and nuclear translocation of SREBPs. Also regulates cholesterol synthesis by regulating degradation of hmgcr. This Danio rerio (Zebrafish) protein is Insulin-induced gene 1 protein.